We begin with the raw amino-acid sequence, 320 residues long: Mitochondrial glycine transporter (320 aa).

Solcar repeat units lie at residues 8-92, 121-205, and 223-307; these read SKTT…LRQG, LSNW…LKRR, and SSSS…LILR. The next 6 membrane-spanning stretches (helical) occupy residues 14–39, 67–93, 127–152, 180–203, 227–253, and 282–300; these read FAAGLCSGLTSSILLQPADLLKTRVQ, GTLPSALRTGFGSALYFTSLNALRQGL, LATGAVARTAAGFVMMPVTVLKVRYE, GFGATAARDAPYAGLYVLFYEQLK, INFVSGGLAAGLATAITNPFDAVKTRL, and GLGLRITRKALSSALAWTV.

This sequence belongs to the mitochondrial carrier (TC 2.A.29) family. SLC25A38 subfamily.

Its subcellular location is the mitochondrion inner membrane. It catalyses the reaction glycine(in) = glycine(out). Mitochondrial glycine transporter that imports glycine into the mitochondrial matrix. Plays an important role in providing glycine for the first enzymatic step in heme biosynthesis, the condensation of glycine with succinyl-CoA to produce 5-aminolevulinate (ALA) in the mitochondrial matrix. The protein is Mitochondrial glycine transporter of Aspergillus fumigatus (strain CBS 144.89 / FGSC A1163 / CEA10) (Neosartorya fumigata).